Reading from the N-terminus, the 225-residue chain is Transcription factor HES-7 (225 aa).

One can recognise a bHLH domain in the interval 12 to 69; sequence GPKMLKPLVEKRRRDRINRSLEELRLLLLERTRDQNLRNPKLEKAEILEFAVGYLRER. Residues 92–122 form the Orange domain; that stretch reads YLSGFRECLLRLAAFAHDASPAARSQLFSAL. Residues 124 to 225 are disordered; sequence GYRRPKPPRP…PPPAFWRPWP (102 aa). Composition is skewed to pro residues over residues 140–149 and 213–225; these read LPAPRPPLDP and PSLPPPAFWRPWP. The WRPW motif motif lies at 221–224; it reads WRPW.

Transcription repression requires formation of a complex with a corepressor protein of the Groucho/TLE family.

Its subcellular location is the nucleus. Transcriptional repressor. Represses transcription from both N box- and E box-containing promoters. May with HES1, cooperatively regulate somite formation in the presomitic mesoderm (PSM). May function as a segmentation clock, which is essential for coordinated somite segmentation. In Mus musculus (Mouse), this protein is Transcription factor HES-7 (Hes7).